The sequence spans 319 residues: Methionyl-tRNA formyltransferase (319 aa).

116–119 (SLLP) lines the (6S)-5,6,7,8-tetrahydrofolate pocket.

The protein belongs to the Fmt family.

The enzyme catalyses L-methionyl-tRNA(fMet) + (6R)-10-formyltetrahydrofolate = N-formyl-L-methionyl-tRNA(fMet) + (6S)-5,6,7,8-tetrahydrofolate + H(+). In terms of biological role, attaches a formyl group to the free amino group of methionyl-tRNA(fMet). The formyl group appears to play a dual role in the initiator identity of N-formylmethionyl-tRNA by promoting its recognition by IF2 and preventing the misappropriation of this tRNA by the elongation apparatus. The sequence is that of Methionyl-tRNA formyltransferase from Wigglesworthia glossinidia brevipalpis.